Reading from the N-terminus, the 235-residue chain is MQQKNWTIDLEGMMAAGIHFGHQTQRWNPKMSPYIFTERKGVHILDLTQTARLLSEACDLVFDAAVEGKEFLMVGTKNQVTDLIVSAALKSQCHYVNEKWLAGTLTNWVTTETRLRRFQHLQTGGDLGEFDRLPKREAAILKGQLVRLKKCLGGIQYMSDLPDIAIITDQHEQSIALKECSILGIPTICIVDTDCDPDLVDVPIPGNDDARSSIRWILDKLALAISEGRSNIKVT.

Belongs to the universal ribosomal protein uS2 family.

The protein resides in the plastid. The protein localises to the chloroplast. The sequence is that of Small ribosomal subunit protein uS2c (rps2) from Adiantum capillus-veneris (Maidenhair fern).